The primary structure comprises 290 residues: O-methyltransferase agiB (290 aa).

Asp155 is a binding site for S-adenosyl-L-methionine. His194 acts as the Proton acceptor in catalysis.

The protein belongs to the class I-like SAM-binding methyltransferase superfamily. Cation-independent O-methyltransferase family.

Its pathway is secondary metabolite biosynthesis. O-methyltransferase; part of the gene cluster that mediates the biosynthesis of the aspergillicins A and F, 2 cryptic cyclic hexa-depsipeptides. The hexamodular NRPS agiA catalyzes the condensation of the six amino acid residues including N-Me-L-O-Me-tyrosine, L-proline 1, L-proline 2, D-isoleucine, O-acetyl-threonine, and L-isoleucine. The starting condensation domain (C1) of agiA probably loads acetyl-CoA which is condensed on the N-terminus of threonine by the first module to yield O-acetyl-threonine. The second module then loads L-isoleucine. The epimerase (E) domain on module 2 is probably involved in the formation of the D-isoleucine moiety. Modules 3 and 4 further load 2 successive L-prolines. Module 5 is then involved in the condensation of O-Me-L-tyrosine produced by the O-methyltransferase agiB and the N-methyl transferase (NMeT) domain on module 5 probably catalyzes the N-methylation to yield the N-Me-L-O-Me-tyrosine moiety. The A domain of module 5 loads preferentially O-Me-L-tyrosine, but it can also accept L-phenylalanine, which leads to the production of aspergillicin G. Module 6 then loads the last residue, L-isoleucine. The C-terminal thiolesterase (TE) domain probably cyclizes the peptide using the hydroxy group from threonine to form the cyclic depsipeptide. This is O-methyltransferase agiB from Aspergillus flavus (strain ATCC 200026 / FGSC A1120 / IAM 13836 / NRRL 3357 / JCM 12722 / SRRC 167).